A 586-amino-acid chain; its full sequence is Major facilitator superfamily domain-containing protein 6-like (586 aa).

The next 2 helical transmembrane spans lie at 50–70 (TLMG…AFLA) and 78–98 (ALLI…VLVP). The disordered stretch occupies residues 133-160 (AQESASSHPAKRTAEVEMPGFRNPPGES). A run of 9 helical transmembrane segments spans residues 246–266 (FILS…LEQV), 287–307 (LWVW…ALVG), 326–346 (GYSV…IPIC), 361–381 (IVGG…VGAI), 400–420 (ELVM…LHPF), 433–455 (LVGL…WSWW), 456–476 (SVLP…WAVG), 499–519 (FYGS…MRFS), and 521–541 (AVLY…LLSI).

It belongs to the major facilitator superfamily. MFSD6 family.

It is found in the membrane. The polypeptide is Major facilitator superfamily domain-containing protein 6-like (MFSD6L) (Homo sapiens (Human)).